The sequence spans 474 residues: Aspartyl/glutamyl-tRNA(Asn/Gln) amidotransferase subunit B (474 aa).

The protein belongs to the GatB/GatE family. GatB subfamily. As to quaternary structure, heterotrimer of A, B and C subunits.

The enzyme catalyses L-glutamyl-tRNA(Gln) + L-glutamine + ATP + H2O = L-glutaminyl-tRNA(Gln) + L-glutamate + ADP + phosphate + H(+). It catalyses the reaction L-aspartyl-tRNA(Asn) + L-glutamine + ATP + H2O = L-asparaginyl-tRNA(Asn) + L-glutamate + ADP + phosphate + 2 H(+). Functionally, allows the formation of correctly charged Asn-tRNA(Asn) or Gln-tRNA(Gln) through the transamidation of misacylated Asp-tRNA(Asn) or Glu-tRNA(Gln) in organisms which lack either or both of asparaginyl-tRNA or glutaminyl-tRNA synthetases. The reaction takes place in the presence of glutamine and ATP through an activated phospho-Asp-tRNA(Asn) or phospho-Glu-tRNA(Gln). The chain is Aspartyl/glutamyl-tRNA(Asn/Gln) amidotransferase subunit B from Limosilactobacillus fermentum (strain NBRC 3956 / LMG 18251) (Lactobacillus fermentum).